Reading from the N-terminus, the 229-residue chain is AA9 family lytic polysaccharide monooxygenase E (229 aa).

The first 19 residues, 1–19, serve as a signal peptide directing secretion; it reads MRSSDITFVLLSVVATVRS. Histidine 20 provides a ligand contact to Cu(2+). A disulfide bridge connects residues cysteine 57 and cysteine 178. Residue asparagine 76 is glycosylated (N-linked (GlcNAc...) asparagine). Residue histidine 99 participates in Cu(2+) binding. The O2 site is built by histidine 164 and glutamine 173. Residue tyrosine 175 participates in Cu(2+) binding. The N-linked (GlcNAc...) asparagine glycan is linked to asparagine 217.

This sequence belongs to the polysaccharide monooxygenase AA9 family. It depends on Cu(2+) as a cofactor.

It is found in the secreted. The enzyme catalyses [(1-&gt;4)-beta-D-glucosyl]n+m + reduced acceptor + O2 = 4-dehydro-beta-D-glucosyl-[(1-&gt;4)-beta-D-glucosyl]n-1 + [(1-&gt;4)-beta-D-glucosyl]m + acceptor + H2O.. Lytic polysaccharide monooxygenase (LPMO) that depolymerizes crystalline and amorphous polysaccharides via the oxidation of scissile alpha- or beta-(1-4)-glycosidic bonds, yielding C1 and C4 oxidation products. Catalysis by LPMOs requires the reduction of the active-site copper from Cu(II) to Cu(I) by a reducing agent and H(2)O(2) or O(2) as a cosubstrate. The polypeptide is AA9 family lytic polysaccharide monooxygenase E (Botryotinia fuckeliana (strain B05.10) (Noble rot fungus)).